The primary structure comprises 408 residues: MIPNEKLKLLGLLSISFFLQWYLANTWIAEFLYRRIEVSTPVSGFLRVREGLYLYENGLDPYSGGVFYQSPLLLILNYCCELLGGISVTRFVYTSISTMGGLFVYLIAKQARVLDPNQVLSTCSPLWISVIYLLNPLTFLPGIACSADMILNFTTLMTIYFASCGSYAIYACCMALTVFINPNALLLFFPSYLILRKCNSSIKFRQIFVVFLFYLAGLIITSGFFLNSLSFLKIPFRVYLDSHDLTPNLGLWWYFFTEMFNEFRTFFLFVFAILPLMFVLPVSIRLYYLPLPITIALIGLHSLFKAYPSICDLSIFLSLLPIFNKVQDRMRYSLLTNNAIVFALVLGSAFYHSWITLGCGNANFYYASNLILALGLSLKIMDFLKALLLVDWYANHPQHENIPLKQVQ.

The next 10 helical transmembrane spans lie at 9-29 (LLGL…TWIA), 66-86 (VFYQ…LGGI), 88-108 (VTRF…YLIA), 125-145 (PLWI…GIAC), 149-169 (MILN…SYAI), 207-227 (IFVV…FFLN), 266-286 (FFLF…SIRL), 303-323 (LFKA…LPIF), 339-359 (AIVF…TLGC), and 370-390 (LILA…LLLV). A may be involved in recognition of long-chain fatty acids in GPI region spans residues 247 to 267 (PNLGLWWYFFTEMFNEFRTFF).

It belongs to the PIGU family. Forms a complex with PIG-S homolog, PIG-T homolog and GPI8.

Its subcellular location is the endoplasmic reticulum membrane. Its pathway is glycolipid biosynthesis; glycosylphosphatidylinositol-anchor biosynthesis. Component of the GPI transamidase complex. May be involved in the recognition of either the GPI attachment signal or the lipid portion of GPI. This is GPI transamidase component GAB1 homolog from Schizosaccharomyces pombe (strain 972 / ATCC 24843) (Fission yeast).